Here is a 222-residue protein sequence, read N- to C-terminus: 7-cyano-7-deazaguanine synthase (222 aa).

11 to 21 lines the ATP pocket; the sequence is LSGGMDSAVLL. Zn(2+)-binding residues include Cys-192, Cys-200, Cys-203, and Cys-206.

It belongs to the QueC family. The cofactor is Zn(2+).

It carries out the reaction 7-carboxy-7-deazaguanine + NH4(+) + ATP = 7-cyano-7-deazaguanine + ADP + phosphate + H2O + H(+). The protein operates within purine metabolism; 7-cyano-7-deazaguanine biosynthesis. In terms of biological role, catalyzes the ATP-dependent conversion of 7-carboxy-7-deazaguanine (CDG) to 7-cyano-7-deazaguanine (preQ(0)). The polypeptide is 7-cyano-7-deazaguanine synthase (Sulfurihydrogenibium sp. (strain YO3AOP1)).